Consider the following 126-residue polypeptide: Large ribosomal subunit protein bL12 (126 aa).

This sequence belongs to the bacterial ribosomal protein bL12 family. As to quaternary structure, homodimer. Part of the ribosomal stalk of the 50S ribosomal subunit. Forms a multimeric L10(L12)X complex, where L10 forms an elongated spine to which 2 to 4 L12 dimers bind in a sequential fashion. Binds GTP-bound translation factors.

Forms part of the ribosomal stalk which helps the ribosome interact with GTP-bound translation factors. Is thus essential for accurate translation. This is Large ribosomal subunit protein bL12 from Coxiella burnetii (strain CbuK_Q154) (Coxiella burnetii (strain Q154)).